Reading from the N-terminus, the 129-residue chain is Small ribosomal subunit protein uS12 (129 aa).

The interval 110–129 (RKQGRSRYGAHRKQVAATKK) is disordered.

It belongs to the universal ribosomal protein uS12 family. In terms of assembly, part of the 30S ribosomal subunit. Contacts proteins S8 and S17. May interact with IF1 in the 30S initiation complex.

Its function is as follows. With S4 and S5 plays an important role in translational accuracy. Functionally, interacts with and stabilizes bases of the 16S rRNA that are involved in tRNA selection in the A site and with the mRNA backbone. Located at the interface of the 30S and 50S subunits, it traverses the body of the 30S subunit contacting proteins on the other side and probably holding the rRNA structure together. The combined cluster of proteins S8, S12 and S17 appears to hold together the shoulder and platform of the 30S subunit. This chain is Small ribosomal subunit protein uS12, found in Rickettsia prowazekii (strain Madrid E).